Consider the following 37-residue polypeptide: Photosystem II reaction center protein T (37 aa).

A helical membrane pass occupies residues 3 to 23 (ALVYTFLLVSTLGILFFAIFF).

The protein belongs to the PsbT family. As to quaternary structure, PSII is composed of 1 copy each of membrane proteins PsbA, PsbB, PsbC, PsbD, PsbE, PsbF, PsbH, PsbI, PsbJ, PsbK, PsbL, PsbM, PsbT, PsbY, PsbZ, Psb30/Ycf12, at least 3 peripheral proteins of the oxygen-evolving complex and a large number of cofactors. It forms dimeric complexes.

The protein localises to the plastid. It is found in the chloroplast thylakoid membrane. Its function is as follows. Found at the monomer-monomer interface of the photosystem II (PS II) dimer, plays a role in assembly and dimerization of PSII. PSII is a light-driven water plastoquinone oxidoreductase, using light energy to abstract electrons from H(2)O, generating a proton gradient subsequently used for ATP formation. The protein is Photosystem II reaction center protein T of Ephedra sinica (Chinese ephedra).